We begin with the raw amino-acid sequence, 116 residues long: Iron-sulfur cluster insertion protein ErpA (116 aa).

Iron-sulfur cluster-binding residues include C44, C108, and C110.

This sequence belongs to the HesB/IscA family. As to quaternary structure, homodimer. Requires iron-sulfur cluster as cofactor.

Functionally, required for insertion of 4Fe-4S clusters for at least IspG. The chain is Iron-sulfur cluster insertion protein ErpA from Aeromonas hydrophila subsp. hydrophila (strain ATCC 7966 / DSM 30187 / BCRC 13018 / CCUG 14551 / JCM 1027 / KCTC 2358 / NCIMB 9240 / NCTC 8049).